The following is a 130-amino-acid chain: Small ribosomal subunit protein uS11c (130 aa).

The protein belongs to the universal ribosomal protein uS11 family. In terms of assembly, part of the 30S ribosomal subunit.

It is found in the plastid. The protein localises to the chloroplast. In Chara vulgaris (Common stonewort), this protein is Small ribosomal subunit protein uS11c.